Reading from the N-terminus, the 260-residue chain is Ribosomal RNA small subunit methyltransferase J (260 aa).

Residues 101–102 (RD), 117–118 (ER), 153–154 (SS), and D176 contribute to the S-adenosyl-L-methionine site.

This sequence belongs to the methyltransferase superfamily. RsmJ family.

The protein resides in the cytoplasm. The enzyme catalyses guanosine(1516) in 16S rRNA + S-adenosyl-L-methionine = N(2)-methylguanosine(1516) in 16S rRNA + S-adenosyl-L-homocysteine + H(+). In terms of biological role, specifically methylates the guanosine in position 1516 of 16S rRNA. The protein is Ribosomal RNA small subunit methyltransferase J of Aliivibrio salmonicida (strain LFI1238) (Vibrio salmonicida (strain LFI1238)).